We begin with the raw amino-acid sequence, 102 residues long: Ribosomal silencing factor RsfS (102 aa).

The protein belongs to the Iojap/RsfS family. In terms of assembly, interacts with ribosomal protein uL14 (rplN).

The protein localises to the cytoplasm. Functions as a ribosomal silencing factor. Interacts with ribosomal protein uL14 (rplN), blocking formation of intersubunit bridge B8. Prevents association of the 30S and 50S ribosomal subunits and the formation of functional ribosomes, thus repressing translation. The sequence is that of Ribosomal silencing factor RsfS from Haemophilus influenzae (strain ATCC 51907 / DSM 11121 / KW20 / Rd).